The chain runs to 217 residues: Large ribosomal subunit protein uL3 (217 aa).

This sequence belongs to the universal ribosomal protein uL3 family. As to quaternary structure, part of the 50S ribosomal subunit. Forms a cluster with proteins L14 and L19.

One of the primary rRNA binding proteins, it binds directly near the 3'-end of the 23S rRNA, where it nucleates assembly of the 50S subunit. This chain is Large ribosomal subunit protein uL3, found in Mycobacterium marinum (strain ATCC BAA-535 / M).